A 453-amino-acid chain; its full sequence is Ribosomal protein uS12 methylthiotransferase RimO (453 aa).

Residues 5 to 120 enclose the MTTase N-terminal domain; the sequence is PKVGFVSLGC…VMQAVHSHLP (116 aa). [4Fe-4S] cluster contacts are provided by C14, C50, C79, C151, C155, and C158. Positions 137–382 constitute a Radical SAM core domain; sequence LTPRHYAYLK…MEVAEEVSAQ (246 aa). Positions 385–453 constitute a TRAM domain; it reads QRKVGKTLKV…ADGHDLWGEV (69 aa).

Belongs to the methylthiotransferase family. RimO subfamily. [4Fe-4S] cluster is required as a cofactor.

The protein localises to the cytoplasm. The catalysed reaction is L-aspartate(89)-[ribosomal protein uS12]-hydrogen + (sulfur carrier)-SH + AH2 + 2 S-adenosyl-L-methionine = 3-methylsulfanyl-L-aspartate(89)-[ribosomal protein uS12]-hydrogen + (sulfur carrier)-H + 5'-deoxyadenosine + L-methionine + A + S-adenosyl-L-homocysteine + 2 H(+). Functionally, catalyzes the methylthiolation of an aspartic acid residue of ribosomal protein uS12. The sequence is that of Ribosomal protein uS12 methylthiotransferase RimO from Burkholderia ambifaria (strain ATCC BAA-244 / DSM 16087 / CCUG 44356 / LMG 19182 / AMMD) (Burkholderia cepacia (strain AMMD)).